The sequence spans 50 residues: Omega-conotoxin Bu8 (50 aa).

Residue Ala1 is a signal peptide. A propeptide spanning residues 2–24 (EDSRGTQLHRALRKATKLSESTR) is cleaved from the precursor. Cystine bridges form between Cys25–Cys40, Cys32–Cys44, and Cys39–Cys49. Cys49 is subject to Cysteine amide.

It belongs to the conotoxin O1 superfamily. In terms of tissue distribution, expressed by the venom duct.

It localises to the secreted. Omega-conotoxins act at presynaptic membranes, they bind and block voltage-gated calcium channels (Cav). This toxin selectively and potently inhibits depolarization-activated rat Cav2.2/CACNA1B currents (IC(50)=89 nM), when coexpressed with alpha-2/delta-1 (CACNA2D1) and beta-3 (CACNB3) subunits. In vivo, is lethal to fish and displays potent analgesic activity in mice pain models of hot plate and acetic acid writhing but has fewer side effects on mouse motor function and lower toxicity in goldfish. Shows higher or similar analgesic activity in the pain models mentioned above compared to MVIIA, and lower side effects. In addition, it blocks Cav2.2/CACNA1B more rapidly than MVIIA and also dissociates more rapidly. The sequence is that of Omega-conotoxin Bu8 from Conus bullatus (Bubble cone).